The following is a 486-amino-acid chain: Keratin, type II cuticular Hb6 (486 aa).

The tract at residues 1–106 (MTCGSYCGGR…PNAQCVKHEE (106 aa)) is head. An IF rod domain is found at 106–417 (EKEQIKCLNS…RLLEGEEQRL (312 aa)). Positions 107–141 (KEQIKCLNSKFAAFIDKVRFLEQQNKLLETKWQFY) are coil 1A. The tract at residues 142–151 (QNRKCCESNM) is linker 1. The coil 1B stretch occupies residues 152–252 (EPLFEGYIEA…YDEETRILHS (101 aa)). K212 is covalently cross-linked (Glycyl lysine isopeptide (Lys-Gly) (interchain with G-Cter in SUMO1)). Residues 253–269 (HISDTSIVVKMDNSRDL) are linker 12. Positions 270-413 (NMDCVVAEIK…TTYRRLLEGE (144 aa)) are coil 2. The tract at residues 414 to 486 (EQRLCEGVGS…GACSGGCKKC (73 aa)) is tail.

It belongs to the intermediate filament family. Heterotetramer of two type I and two type II keratins.

In Mus musculus (Mouse), this protein is Keratin, type II cuticular Hb6 (Krt86).